The primary structure comprises 154 residues: Superoxide dismutase [Cu-Zn] (154 aa).

Residues His47, His49, and His64 each contribute to the Cu cation site. Residues Cys58 and Cys147 are joined by a disulfide bond. Residues His64, His72, His81, and Asp84 each contribute to the Zn(2+) site. His121 serves as a coordination point for Cu cation. Positions 125–136 (DDLGKGGNEESL) are enriched in basic and acidic residues. The disordered stretch occupies residues 125-144 (DDLGKGGNEESLKTGNAGPR). Substrate is bound at residue Arg144.

Belongs to the Cu-Zn superoxide dismutase family. In terms of assembly, homodimer. It depends on Cu cation as a cofactor. Zn(2+) is required as a cofactor.

The protein localises to the cytoplasm. It catalyses the reaction 2 superoxide + 2 H(+) = H2O2 + O2. In terms of biological role, destroys radicals which are normally produced within the cells and which are toxic to biological systems. The polypeptide is Superoxide dismutase [Cu-Zn] (SOD1) (Cordyceps tenuipes (Entomopathogenic fungus)).